The primary structure comprises 499 residues: Patatin-like protein 6 (499 aa).

The 204-residue stretch at 111-314 (LSIDSGGMRG…AMSNPTAAAI (204 aa)) folds into the PNPLA domain. A GGXR motif is present at residues 116–119 (GGMR). Residue Ser155 is the Nucleophile of the active site. The active-site Proton acceptor is Asp301. Residues 301-303 (DGG) carry the DGA/G motif.

It belongs to the patatin family. Highly expressed in siliques and at lower levels in roots and flowers.

Possesses non-specific lipolytic acyl hydrolase (LAH) activity. Hydrolyzes phospholipids as well as galactolipids. May play a role in disease resistance. This is Patatin-like protein 6 (PLP6) from Arabidopsis thaliana (Mouse-ear cress).